The sequence spans 202 residues: dTTP/UTP pyrophosphatase (202 aa).

Residue aspartate 71 is the Proton acceptor of the active site.

This sequence belongs to the Maf family. YhdE subfamily. It depends on a divalent metal cation as a cofactor.

The protein resides in the cytoplasm. It carries out the reaction dTTP + H2O = dTMP + diphosphate + H(+). The catalysed reaction is UTP + H2O = UMP + diphosphate + H(+). Its function is as follows. Nucleoside triphosphate pyrophosphatase that hydrolyzes dTTP and UTP. May have a dual role in cell division arrest and in preventing the incorporation of modified nucleotides into cellular nucleic acids. In Zymomonas mobilis subsp. mobilis (strain ATCC 31821 / ZM4 / CP4), this protein is dTTP/UTP pyrophosphatase.